The chain runs to 485 residues: Cysteine--tRNA ligase (485 aa).

C29 serves as a coordination point for Zn(2+). Positions 31–41 match the 'HIGH' region motif; it reads VTVYDHCHIGH. Zn(2+) contacts are provided by C209, H234, and E238. A 'KMSKS' region motif is present at residues 266 to 270; the sequence is KMSKS. K269 serves as a coordination point for ATP.

Belongs to the class-I aminoacyl-tRNA synthetase family. As to quaternary structure, monomer. It depends on Zn(2+) as a cofactor.

It is found in the cytoplasm. The catalysed reaction is tRNA(Cys) + L-cysteine + ATP = L-cysteinyl-tRNA(Cys) + AMP + diphosphate. The protein is Cysteine--tRNA ligase of Geobacter metallireducens (strain ATCC 53774 / DSM 7210 / GS-15).